The sequence spans 1947 residues: Sodium channel protein type 3 subunit alpha (1947 aa).

Over M1–S128 the chain is Cytoplasmic. The disordered stretch occupies residues R28–N60. A compositionally biased stretch (basic and acidic residues) spans E46–A57. Residues I110–Q455 form an I repeat. Residues L129–T146 traverse the membrane as a helical segment. The Extracellular segment spans residues L147 to D152. A helical transmembrane segment spans residues W153–L174. Topologically, residues A175–D188 are cytoplasmic. The chain crosses the membrane as a helical span at residues P189–F206. Residues V207–S213 are Extracellular-facing. N-linked (GlcNAc...) asparagine glycosylation occurs at N211. A helical membrane pass occupies residues A214–T235. Topologically, residues I236–D249 are cytoplasmic. A helical transmembrane segment spans residues V250–F269. Residues M270–F369 lie on the Extracellular side of the membrane. N-linked (GlcNAc...) asparagine glycosylation is found at N290, N296, N302, N307, and N339. Positions S370–E386 form an intramembrane region, pore-forming. Topologically, residues N387–G397 are extracellular. The chain crosses the membrane as a helical span at residues K398–A424. At M425 to F712 the chain is on the cytoplasmic side. Phosphoserine occurs at positions 484, 485, and 486. Disordered stretches follow at residues S493–E529 and V587–V632. Residues R500–R509 are compositionally biased toward basic residues. Composition is skewed to basic and acidic residues over residues E510–E529 and D596–N622. An II repeat occupies C693 to G965. The chain crosses the membrane as a helical span at residues V713 to M730. Topologically, residues E731 to Q738 are extracellular. The helical transmembrane segment at F739–I763 threads the bilayer. The Cytoplasmic segment spans residues A764 to E773. The helical transmembrane segment at G774 to A793 threads the bilayer. Residues N794–G797 lie on the Extracellular side of the membrane. The chain crosses the membrane as a helical span at residues L798–W816. At P817–G834 the chain is on the cytoplasmic side. Residues N835–F855 form a helical membrane-spanning segment. Over G856–F880 the chain is Extracellular. Cysteines 864 and 870 form a disulfide. The segment at residues F881–I896 is an intramembrane region (pore-forming). The Extracellular segment spans residues E897–G907. C902 and C911 form a disulfide bridge. Residues Q908 to L934 traverse the membrane as a helical segment. Residues L935–H1157 lie on the Cytoplasmic side of the membrane. The tract at residues E1070–E1113 is disordered. The III repeat unit spans residues K1140 to L1451. A helical transmembrane segment spans residues N1158–E1178. Residues D1179–T1190 lie on the Extracellular side of the membrane. Residues M1191–V1212 traverse the membrane as a helical segment. Residues A1213–T1218 lie on the Cytoplasmic side of the membrane. The chain crosses the membrane as a helical span at residues Y1219–L1244. Residues G1245 to K1253 lie on the Extracellular side of the membrane. A helical membrane pass occupies residues S1254 to G1272. The Cytoplasmic segment spans residues M1273–P1285. The helical transmembrane segment at S1286–L1308 threads the bilayer. The Extracellular portion of the chain corresponds to F1309–N1354. Cysteines 1316 and 1336 form a disulfide. N-linked (GlcNAc...) asparagine glycans are attached at residues N1318 and N1332. An intramembrane region (pore-forming) is located at residues V1355 to W1371. Residues M1372–L1394 lie on the Extracellular side of the membrane. A helical membrane pass occupies residues Y1395–I1420. Topologically, residues D1421–Q1478 are cytoplasmic. At S1453 the chain carries Phosphoserine. The stretch at I1460–Q1758 is one IV repeat. Residues V1479–V1497 form a helical membrane-spanning segment. Topologically, residues E1498–Y1505 are extracellular. Residues M1506–L1529 traverse the membrane as a helical segment. Residues I1530–I1539 are Cytoplasmic-facing. Residues G1540–F1557 traverse the membrane as a helical segment. The Extracellular segment spans residues L1558–P1569. Residues T1570–G1592 form a helical membrane-spanning segment. Over I1593–P1605 the chain is Cytoplasmic. A helical transmembrane segment spans residues A1606–F1629. The Extracellular segment spans residues A1630–M1651. Residues I1652 to D1664 constitute an intramembrane region (pore-forming). Topologically, residues G1665–P1696 are extracellular. A helical transmembrane segment spans residues S1697–I1722. The Cytoplasmic segment spans residues L1723–V1947. The IQ domain maps to E1852–K1881. The tract at residues L1901–V1947 is disordered. The segment covering T1926–V1947 has biased composition (basic and acidic residues).

Belongs to the sodium channel (TC 1.A.1.10) family. Nav1.3/SCN3A subfamily. Heterooligomer of an alpha subunit, SCN3A, and 1 to 3 regulatory beta subunits including SCN1B and SCN2B; disulfide-linked with some beta subunits like SCN2B. Interacts with NEDD4L; could regulate expression of SCN3A at the plasma membrane through ubiquitination-regulated endocytosis. Post-translationally, may be ubiquitinated by NEDD4L; which would promote its endocytosis. In terms of processing, phosphorylation at Ser-1453 in a highly conserved cytoplasmic loop slows inactivation of the channel and reduces peak sodium currents. Expressed in enterochromaffin cells in both colon and small bowel (at protein level). Expressed in pancreatic alpha and beta cells.

Its subcellular location is the cell membrane. It localises to the basal cell membrane. The catalysed reaction is Na(+)(in) = Na(+)(out). Its function is as follows. Pore-forming subunit of Nav1.3, a voltage-gated sodium (Nav) channel that directly mediates the depolarizing phase of action potentials in excitable membranes. Navs, also called VGSCs (voltage-gated sodium channels) or VDSCs (voltage-dependent sodium channels), operate by switching between closed and open conformations depending on the voltage difference across the membrane. In the open conformation they allow Na(+) ions to selectively pass through the pore, along their electrochemical gradient. The influx of Na+ ions provokes membrane depolarization, initiating the propagation of electrical signals throughout cells and tissues. In some secretory cell types, it also participates in cell excitability through membrane depolarization and regulates cells responsiveness to stimuli triggering secretion. For instance, it controls the release of serotonin/5-hydroxytryptamine by enterochromaffin cells and is required for both glucagon- and glucose-induced insulin secretion in pancreatic endocrine cells. This is Sodium channel protein type 3 subunit alpha from Mus musculus (Mouse).